A 45-amino-acid polypeptide reads, in one-letter code: Cytochrome b559 subunit beta (45 aa).

Residues 20-36 (WLALHTLGIPTVFFLGA) form a helical membrane-spanning segment. A heme-binding site is contributed by histidine 24.

The protein belongs to the PsbE/PsbF family. As to quaternary structure, heterodimer of an alpha subunit and a beta subunit. PSII is composed of 1 copy each of membrane proteins PsbA, PsbB, PsbC, PsbD, PsbE, PsbF, PsbH, PsbI, PsbJ, PsbK, PsbL, PsbM, PsbT, PsbX, PsbY, PsbZ, Psb30/Ycf12, peripheral proteins PsbO, CyanoQ (PsbQ), PsbU, PsbV and a large number of cofactors. It forms dimeric complexes. Heme b serves as cofactor.

The protein localises to the cellular thylakoid membrane. This b-type cytochrome is tightly associated with the reaction center of photosystem II (PSII). PSII is a light-driven water:plastoquinone oxidoreductase that uses light energy to abstract electrons from H(2)O, generating O(2) and a proton gradient subsequently used for ATP formation. It consists of a core antenna complex that captures photons, and an electron transfer chain that converts photonic excitation into a charge separation. The protein is Cytochrome b559 subunit beta of Synechococcus sp. (strain CC9902).